The primary structure comprises 137 residues: Small ribosomal subunit protein uS12 (137 aa).

Residues 1-57 (MPTINQLVRKPRKSKVEKSKSPALNVGYNSLKRVPTNESAPQKRGVATRVGTMTPKK) form a disordered region. Aspartate 102 carries the post-translational modification 3-methylthioaspartic acid.

The protein belongs to the universal ribosomal protein uS12 family. As to quaternary structure, part of the 30S ribosomal subunit. Contacts proteins S8 and S17. May interact with IF1 in the 30S initiation complex.

Its function is as follows. With S4 and S5 plays an important role in translational accuracy. Interacts with and stabilizes bases of the 16S rRNA that are involved in tRNA selection in the A site and with the mRNA backbone. Located at the interface of the 30S and 50S subunits, it traverses the body of the 30S subunit contacting proteins on the other side and probably holding the rRNA structure together. The combined cluster of proteins S8, S12 and S17 appears to hold together the shoulder and platform of the 30S subunit. In Streptococcus gordonii (strain Challis / ATCC 35105 / BCRC 15272 / CH1 / DL1 / V288), this protein is Small ribosomal subunit protein uS12.